The sequence spans 71 residues: High-potential iron-sulfur protein (71 aa).

Gln1 is subject to Pyrrolidone carboxylic acid. 4 residues coordinate [4Fe-4S] cluster: Cys37, Cys40, Cys50, and Cys64.

Belongs to the high-potential iron-sulfur protein (HiPIP) family. As to quaternary structure, homodimer.

In terms of biological role, specific class of high-redox-potential 4Fe-4S ferredoxins. Functions in anaerobic electron transport in most purple and in some other photosynthetic bacteria and in at least one genus (Paracoccus) of halophilic, denitrifying bacteria. The polypeptide is High-potential iron-sulfur protein (hip) (Halomonas halodenitrificans (strain ATCC 12084 / NCIMB 8669) (Paracoccus halodenitrificans)).